Here is a 524-residue protein sequence, read N- to C-terminus: Probable cytosol aminopeptidase (524 aa).

Lys-288 and Asp-293 together coordinate Mn(2+). Lys-300 is an active-site residue. 3 residues coordinate Mn(2+): Asp-311, Asp-370, and Glu-372. Arg-374 is an active-site residue.

This sequence belongs to the peptidase M17 family. Requires Mn(2+) as cofactor.

The protein resides in the cytoplasm. It catalyses the reaction Release of an N-terminal amino acid, Xaa-|-Yaa-, in which Xaa is preferably Leu, but may be other amino acids including Pro although not Arg or Lys, and Yaa may be Pro. Amino acid amides and methyl esters are also readily hydrolyzed, but rates on arylamides are exceedingly low.. The catalysed reaction is Release of an N-terminal amino acid, preferentially leucine, but not glutamic or aspartic acids.. In terms of biological role, presumably involved in the processing and regular turnover of intracellular proteins. Catalyzes the removal of unsubstituted N-terminal amino acids from various peptides. The protein is Probable cytosol aminopeptidase (pepA) of Mycobacterium leprae (strain TN).